The sequence spans 188 residues: Adenine phosphoribosyltransferase (188 aa).

Belongs to the purine/pyrimidine phosphoribosyltransferase family. In terms of assembly, homodimer.

The protein localises to the cytoplasm. The catalysed reaction is AMP + diphosphate = 5-phospho-alpha-D-ribose 1-diphosphate + adenine. The protein operates within purine metabolism; AMP biosynthesis via salvage pathway; AMP from adenine: step 1/1. Its function is as follows. Catalyzes a salvage reaction resulting in the formation of AMP, that is energically less costly than de novo synthesis. The sequence is that of Adenine phosphoribosyltransferase from Neisseria meningitidis serogroup A / serotype 4A (strain DSM 15465 / Z2491).